The primary structure comprises 1068 residues: Carbamoyl phosphate synthase large chain (1068 aa).

Positions 1-401 are carboxyphosphate synthetic domain; sequence MPRNNDIKKV…ALMKAIRSLE (401 aa). Residues Arg129, Arg169, Gly175, Gly176, Arg208, Ile210, Glu215, Gly241, Val242, His243, Gln284, and Glu298 each contribute to the ATP site. Residues 133 to 327 form the ATP-grasp 1 domain; that stretch reads KDTMEKIGEP…IAKVTAKIAL (195 aa). Positions 284, 298, and 300 each coordinate Mg(2+). Mn(2+) is bound by residues Gln284, Glu298, and Asn300. The interval 402–546 is oligomerization domain; that stretch reads QHVDSLMSYD…YSVFGSENEA (145 aa). A carbamoyl phosphate synthetic domain region spans residues 547-930; sequence AETNPQKKVL…ALYKAFEGAG (384 aa). In terms of domain architecture, ATP-grasp 2 spans 672–862; the sequence is DEILQKTGIP…IVDLAARIIM (191 aa). ATP contacts are provided by Arg708, Lys747, Leu749, Glu753, Gly778, Val779, His780, Ser781, Gln821, and Glu833. The Mg(2+) site is built by Gln821, Glu833, and Asn835. 3 residues coordinate Mn(2+): Gln821, Glu833, and Asn835. Residues 931–1068 form the MGS-like domain; sequence VELPKYKQMI…PVDIATVKNL (138 aa). The segment at 931–1068 is allosteric domain; sequence VELPKYKQMI…PVDIATVKNL (138 aa).

The protein belongs to the CarB family. Composed of two chains; the small (or glutamine) chain promotes the hydrolysis of glutamine to ammonia, which is used by the large (or ammonia) chain to synthesize carbamoyl phosphate. Tetramer of heterodimers (alpha,beta)4. Requires Mg(2+) as cofactor. It depends on Mn(2+) as a cofactor.

The enzyme catalyses hydrogencarbonate + L-glutamine + 2 ATP + H2O = carbamoyl phosphate + L-glutamate + 2 ADP + phosphate + 2 H(+). It carries out the reaction hydrogencarbonate + NH4(+) + 2 ATP = carbamoyl phosphate + 2 ADP + phosphate + 2 H(+). It participates in amino-acid biosynthesis; L-arginine biosynthesis; carbamoyl phosphate from bicarbonate: step 1/1. Its pathway is pyrimidine metabolism; UMP biosynthesis via de novo pathway; (S)-dihydroorotate from bicarbonate: step 1/3. Its function is as follows. Large subunit of the glutamine-dependent carbamoyl phosphate synthetase (CPSase). CPSase catalyzes the formation of carbamoyl phosphate from the ammonia moiety of glutamine, carbonate, and phosphate donated by ATP, constituting the first step of 2 biosynthetic pathways, one leading to arginine and/or urea and the other to pyrimidine nucleotides. The large subunit (synthetase) binds the substrates ammonia (free or transferred from glutamine from the small subunit), hydrogencarbonate and ATP and carries out an ATP-coupled ligase reaction, activating hydrogencarbonate by forming carboxy phosphate which reacts with ammonia to form carbamoyl phosphate. This Agathobacter rectalis (strain ATCC 33656 / DSM 3377 / JCM 17463 / KCTC 5835 / VPI 0990) (Eubacterium rectale) protein is Carbamoyl phosphate synthase large chain.